We begin with the raw amino-acid sequence, 430 residues long: tRNA(Ile)-lysidine synthase (430 aa).

21–26 (SGGLDS) is a binding site for ATP.

Belongs to the tRNA(Ile)-lysidine synthase family.

It is found in the cytoplasm. The catalysed reaction is cytidine(34) in tRNA(Ile2) + L-lysine + ATP = lysidine(34) in tRNA(Ile2) + AMP + diphosphate + H(+). In terms of biological role, ligates lysine onto the cytidine present at position 34 of the AUA codon-specific tRNA(Ile) that contains the anticodon CAU, in an ATP-dependent manner. Cytidine is converted to lysidine, thus changing the amino acid specificity of the tRNA from methionine to isoleucine. The sequence is that of tRNA(Ile)-lysidine synthase from Salmonella typhimurium (strain LT2 / SGSC1412 / ATCC 700720).